We begin with the raw amino-acid sequence, 364 residues long: Sulfate/thiosulfate import ATP-binding protein CysA (364 aa).

One can recognise an ABC transporter domain in the interval 3 to 237; sequence IEIARIKKSF…PATRFVLEFM (235 aa). An ATP-binding site is contributed by 35 to 42; it reads GPSGSGKT.

It belongs to the ABC transporter superfamily. Sulfate/tungstate importer (TC 3.A.1.6) family. In terms of assembly, the complex is composed of two ATP-binding proteins (CysA), two transmembrane proteins (CysT and CysW) and a solute-binding protein (CysP).

Its subcellular location is the cell inner membrane. The enzyme catalyses sulfate(out) + ATP + H2O = sulfate(in) + ADP + phosphate + H(+). It carries out the reaction thiosulfate(out) + ATP + H2O = thiosulfate(in) + ADP + phosphate + H(+). Its function is as follows. Part of the ABC transporter complex CysAWTP involved in sulfate/thiosulfate import. Responsible for energy coupling to the transport system. This chain is Sulfate/thiosulfate import ATP-binding protein CysA, found in Salmonella typhi.